Consider the following 28-residue polypeptide: Ranatuerin-2B (28 aa).

An intrachain disulfide couples C23 to C28.

Expressed by the skin glands.

Its subcellular location is the secreted. Its function is as follows. Antibacterial activity against Gram-positive bacterium S.aureus and Gram-negative bacterium E.coli. Has activity against C.albicans. This chain is Ranatuerin-2B, found in Lithobates berlandieri (Rio Grande leopard frog).